We begin with the raw amino-acid sequence, 251 residues long: Putative mediator of RNA polymerase II transcription subunit 18 (251 aa).

The protein belongs to the Mediator complex subunit 18 family. In terms of assembly, component of the Mediator complex.

The protein resides in the nucleus. Its function is as follows. Component of the Mediator complex, a coactivator involved in the regulated transcription of nearly all RNA polymerase II-dependent genes. Mediator functions as a bridge to convey information from gene-specific regulatory proteins to the basal RNA polymerase II transcription machinery. Mediator is recruited to promoters by direct interactions with regulatory proteins and serves as a scaffold for the assembly of a functional preinitiation complex with RNA polymerase II and the general transcription factors. The chain is Putative mediator of RNA polymerase II transcription subunit 18 (med18) from Dictyostelium discoideum (Social amoeba).